We begin with the raw amino-acid sequence, 139 residues long: Large ribosomal subunit protein bL17 (139 aa).

It belongs to the bacterial ribosomal protein bL17 family. Part of the 50S ribosomal subunit. Contacts protein L32.

In Sphingopyxis alaskensis (strain DSM 13593 / LMG 18877 / RB2256) (Sphingomonas alaskensis), this protein is Large ribosomal subunit protein bL17.